A 388-amino-acid chain; its full sequence is Succinate--CoA ligase [ADP-forming] subunit beta (388 aa).

Residues 9–244 enclose the ATP-grasp domain; it reads KQLFSRYGLP…PSQEDPREAQ (236 aa). ATP is bound by residues Lys46, 53–55, Glu99, Thr102, and Glu107; that span reads GRG. Residues Asn199 and Asp213 each coordinate Mg(2+). Substrate is bound by residues Asn264 and 321-323; that span reads GIV.

The protein belongs to the succinate/malate CoA ligase beta subunit family. As to quaternary structure, heterotetramer of two alpha and two beta subunits. Requires Mg(2+) as cofactor.

It catalyses the reaction succinate + ATP + CoA = succinyl-CoA + ADP + phosphate. The catalysed reaction is GTP + succinate + CoA = succinyl-CoA + GDP + phosphate. The protein operates within carbohydrate metabolism; tricarboxylic acid cycle; succinate from succinyl-CoA (ligase route): step 1/1. In terms of biological role, succinyl-CoA synthetase functions in the citric acid cycle (TCA), coupling the hydrolysis of succinyl-CoA to the synthesis of either ATP or GTP and thus represents the only step of substrate-level phosphorylation in the TCA. The beta subunit provides nucleotide specificity of the enzyme and binds the substrate succinate, while the binding sites for coenzyme A and phosphate are found in the alpha subunit. The sequence is that of Succinate--CoA ligase [ADP-forming] subunit beta from Proteus mirabilis (strain HI4320).